Consider the following 125-residue polypeptide: Histone H2A (125 aa).

Basic residues predominate over residues 1-18 (MSGRGKGGKAKAKAKSRS). The disordered stretch occupies residues 1-21 (MSGRGKGGKAKAKAKSRSSRA). Residue Ser2 is modified to N-acetylserine. Gln104 is modified (N5-methylglutamine).

This sequence belongs to the histone H2A family. In terms of assembly, the nucleosome is a histone octamer containing two molecules each of H2A, H2B, H3 and H4 assembled in one H3-H4 heterotetramer and two H2A-H2B heterodimers. The octamer wraps approximately 147 bp of DNA.

The protein resides in the nucleus. The protein localises to the chromosome. Functionally, core component of nucleosome. Nucleosomes wrap and compact DNA into chromatin, limiting DNA accessibility to the cellular machineries which require DNA as a template. Histones thereby play a central role in transcription regulation, DNA repair, DNA replication and chromosomal stability. DNA accessibility is regulated via a complex set of post-translational modifications of histones, also called histone code, and nucleosome remodeling. This is Histone H2A from Mytilus californianus (California mussel).